The primary structure comprises 200 residues: Small ribosomal subunit protein uS4 (200 aa).

A disordered region spans residues 22 to 41; that stretch reads TGKELQKRPYAPGQHGPNQR. Positions 92–152 constitute an S4 RNA-binding domain; it reads SRLDNLVYRM…EKSRNLQVIK (61 aa).

It belongs to the universal ribosomal protein uS4 family. In terms of assembly, part of the 30S ribosomal subunit. Contacts protein S5. The interaction surface between S4 and S5 is involved in control of translational fidelity.

Functionally, one of the primary rRNA binding proteins, it binds directly to 16S rRNA where it nucleates assembly of the body of the 30S subunit. With S5 and S12 plays an important role in translational accuracy. The protein is Small ribosomal subunit protein uS4 of Halalkalibacterium halodurans (strain ATCC BAA-125 / DSM 18197 / FERM 7344 / JCM 9153 / C-125) (Bacillus halodurans).